We begin with the raw amino-acid sequence, 129 residues long: UPF0212 protein MM_2357 (129 aa).

It belongs to the UPF0212 family.

This chain is UPF0212 protein MM_2357, found in Methanosarcina mazei (strain ATCC BAA-159 / DSM 3647 / Goe1 / Go1 / JCM 11833 / OCM 88) (Methanosarcina frisia).